We begin with the raw amino-acid sequence, 141 residues long: Small ribosomal subunit protein bS16 (141 aa).

2 stretches are compositionally biased toward polar residues: residues 89–101 and 109–129; these read NVSV…TEAI and ATAN…TATI. The interval 89 to 141 is disordered; the sequence is NVSVSHAESTEAITNAEPIQATANTESNEVSDSESTATATIRESEEQPPISES.

Belongs to the bacterial ribosomal protein bS16 family.

The polypeptide is Small ribosomal subunit protein bS16 (Trichodesmium erythraeum (strain IMS101)).